Consider the following 276-residue polypeptide: Energy-coupling factor transporter ATP-binding protein EcfA2 (276 aa).

An ABC transporter domain is found at 1–233 (MKTPFERLAL…GEEMAGWGLD (233 aa)). 27–34 (GHTGSGKS) provides a ligand contact to ATP. Residue glutamate 158 is the Proton acceptor of the active site.

The protein belongs to the ABC transporter superfamily. Energy-coupling factor EcfA family. Forms a stable energy-coupling factor (ECF) transporter complex composed of 2 membrane-embedded substrate-binding proteins (S component), 2 ATP-binding proteins (A component) and 2 transmembrane proteins (T component).

It localises to the cell membrane. Its function is as follows. ATP-binding (A) component of a common energy-coupling factor (ECF) ABC-transporter complex. Unlike classic ABC transporters this ECF transporter provides the energy necessary to transport a number of different substrates. This Bacillus subtilis (strain 168) protein is Energy-coupling factor transporter ATP-binding protein EcfA2.